The primary structure comprises 445 residues: 6-phosphogluconate dehydrogenase, decarboxylating (445 aa).

NADP(+) is bound by residues 1-4, 22-24, 63-65, and N91; these read AVMG, NRS, and VKA. Residues N91 and 117–119 contribute to the substrate site; that span reads SGG. K172 serves as the catalytic Proton acceptor. A substrate-binding site is contributed by 175–176; that stretch reads HN. E179 serves as the catalytic Proton donor. Positions 180, 249, 276, 434, and 440 each coordinate substrate.

It belongs to the 6-phosphogluconate dehydrogenase family. As to quaternary structure, homodimer.

It catalyses the reaction 6-phospho-D-gluconate + NADP(+) = D-ribulose 5-phosphate + CO2 + NADPH. Its pathway is carbohydrate degradation; pentose phosphate pathway; D-ribulose 5-phosphate from D-glucose 6-phosphate (oxidative stage): step 3/3. Its function is as follows. Catalyzes the oxidative decarboxylation of 6-phosphogluconate to ribulose 5-phosphate and CO(2), with concomitant reduction of NADP to NADPH. In Raoultella planticola (Klebsiella planticola), this protein is 6-phosphogluconate dehydrogenase, decarboxylating (gnd).